Reading from the N-terminus, the 431-residue chain is tRNA(Ile)-lysidine synthase (431 aa).

26 to 31 is a binding site for ATP; it reads SGGIDS.

Belongs to the tRNA(Ile)-lysidine synthase family.

Its subcellular location is the cytoplasm. The enzyme catalyses cytidine(34) in tRNA(Ile2) + L-lysine + ATP = lysidine(34) in tRNA(Ile2) + AMP + diphosphate + H(+). Ligates lysine onto the cytidine present at position 34 of the AUA codon-specific tRNA(Ile) that contains the anticodon CAU, in an ATP-dependent manner. Cytidine is converted to lysidine, thus changing the amino acid specificity of the tRNA from methionine to isoleucine. This Wolbachia sp. subsp. Brugia malayi (strain TRS) protein is tRNA(Ile)-lysidine synthase.